The following is a 329-amino-acid chain: VSG expression site-associated protein 221A (329 aa).

An N-terminal signal peptide occupies residues 1–23; sequence MKVEIVELVVLLFSVTCVDAWLQ. Residues Asn-73, Asn-294, and Asn-308 are each glycosylated (N-linked (GlcNAc...) asparagine).

Not known but may be related to activation of the variant surface glycoprotein genes. This is VSG expression site-associated protein 221A from Trypanosoma brucei brucei.